The sequence spans 337 residues: Serpentine receptor class beta-6 (337 aa).

The next 7 helical transmembrane spans lie at 20–40, 62–82, 98–118, 138–158, 183–203, 234–254, and 273–293; these read QFYTLLTSIFSVFPLLYLIIF, ILISVLNNCVVFAHHVVIPFL, IFQNIGVFGISCPMLTILGIT, IGVFIGVFAMLCDMALVYFFF, WLCYSLLAINSVNLVFNYFLV, TFISFIHVFFFSLYLIFTLII, and GVYITIPTYNLIIGIASCVIL.

This sequence belongs to the nematode receptor-like protein srb family. As to expression, expressed in the ADL, ADF and ASH chemosensory neurons in the head and in the PHA and PHB chemosensory neurons in the tail. Low expression also observed in the egg-laying structures in the mid-body region.

The protein localises to the cell membrane. In terms of biological role, mediates recognition and avoidance of Streptomyces species by detecting dodecanoic acid secreted by the bacteria. Also mediates avoidance of decanoic acid which is not secreted by Streptomyces species but this may represent an additional important avoidance response in the environment. In Caenorhabditis elegans, this protein is Serpentine receptor class beta-6 (srb-6).